Consider the following 460-residue polypeptide: Dynactin subunit 4 (460 aa).

At Ala2 the chain carries N-acetylalanine. Residues 152–172 are a coiled coil; the sequence is QQLAQKEKVERDRKKLARRRN. Ser196 carries the post-translational modification Phosphoserine. Lys215 participates in a covalent cross-link: Glycyl lysine isopeptide (Lys-Gly) (interchain with G-Cter in SUMO2). Position 407 is a phosphothreonine (Thr407).

Belongs to the dynactin subunit 4 family. As to quaternary structure, subunit of dynactin, a multiprotein complex part of a tripartite complex with dynein and a adapter, such as BICDL1, BICD2 or HOOK3. The dynactin complex is built around ACTR1A/ACTB filament and consists of an actin-related filament composed of a shoulder domain, a pointed end and a barbed end. Its length is defined by its flexible shoulder domain. The soulder is composed of 2 DCTN1 subunits, 4 DCTN2 and 2 DCTN3. The 4 DCNT2 (via N-terminus) bind the ACTR1A filament and act as molecular rulers to determine the length. The pointed end is important for binding dynein-dynactin cargo adapters. Consists of 4 subunits: ACTR10, DCNT4, DCTN5 and DCTN6. The barbed end is composed of a CAPZA1:CAPZB heterodimers, which binds ACTR1A/ACTB filament and dynactin and stabilizes dynactin. Interacts with ATP7B, but not ATP7A, in a copper-dependent manner. Interacts with ANK2; this interaction is required for localization at costameres. Interacts with N4BP2L1.

The protein localises to the cytoplasm. Its subcellular location is the cytoskeleton. It localises to the microtubule organizing center. It is found in the centrosome. The protein resides in the stress fiber. The protein localises to the cell cortex. Its subcellular location is the myofibril. It localises to the sarcomere. Functionally, part of the dynactin complex that activates the molecular motor dynein for ultra-processive transport along microtubules. The chain is Dynactin subunit 4 from Homo sapiens (Human).